Reading from the N-terminus, the 394-residue chain is Elongation factor Tu (394 aa).

The tr-type G domain maps to 10-204; sequence KPHVNVGTIG…AMDDYIPAPE (195 aa). Residues 19 to 26 form a G1 region; sequence GHVDHGKT. 19–26 contributes to the GTP binding site; the sequence is GHVDHGKT. Residue threonine 26 coordinates Mg(2+). The G2 stretch occupies residues 60–64; the sequence is GITIN. A G3 region spans residues 81 to 84; the sequence is DCPG. GTP is bound by residues 81-85 and 136-139; these read DCPGH and NKCD. The tract at residues 136–139 is G4; sequence NKCD. The G5 stretch occupies residues 174–176; it reads SAL.

The protein belongs to the TRAFAC class translation factor GTPase superfamily. Classic translation factor GTPase family. EF-Tu/EF-1A subfamily. As to quaternary structure, monomer.

It localises to the cytoplasm. It catalyses the reaction GTP + H2O = GDP + phosphate + H(+). In terms of biological role, GTP hydrolase that promotes the GTP-dependent binding of aminoacyl-tRNA to the A-site of ribosomes during protein biosynthesis. The chain is Elongation factor Tu from Francisella tularensis subsp. holarctica (strain FTNF002-00 / FTA).